Consider the following 514-residue polypeptide: Cytidine and dCMP deaminase domain-containing protein 1 (514 aa).

2 stretches are compositionally biased toward polar residues: residues 1–11 (MKEAGQMQNLE) and 18–27 (SVSTQTGSMT). 2 disordered regions span residues 1–27 (MKEA…GSMT) and 55–83 (RQKS…TDKR). Over residues 59 to 83 (QKNEEGKHGPLGDNEERTRVSTDKR) the composition is skewed to basic and acidic residues. The 99-residue stretch at 70 to 168 (GDNEERTRVS…SLLTEASSSE (99 aa)) folds into the CMP/dCMP-type deaminase 1 domain. Zn(2+) contacts are provided by His109, Cys134, and Cys137. Positions 271-283 (NLRQNMKDLILLL) match the Nuclear export signal motif. A CMP/dCMP-type deaminase 2 domain is found at 317-482 (EIARHCMVQA…LNPSGAYGLE (166 aa)). Residue His398 coordinates Zn(2+). Glu400 serves as the catalytic Proton donor. 2 residues coordinate Zn(2+): Cys426 and Cys429. The interval 480 to 514 (GLEQNEPERRENGVLRPVPQKEEQHQDKKLRLGIH) is disordered. Residues 485-514 (EPERRENGVLRPVPQKEEQHQDKKLRLGIH) show a composition bias toward basic and acidic residues. Positions 488–510 (RRENGVLRPVPQKEEQHQDKKLR) match the Bipartite nuclear localization signal motif.

The protein belongs to the cytidine and deoxycytidylate deaminase family. The cofactor is Zn(2+). As to expression, widely expressed. Expressed at high levels in the testis.

Its subcellular location is the cytoplasm. It localises to the nucleus. It catalyses the reaction 2'-deoxycytidine + H2O + H(+) = 2'-deoxyuridine + NH4(+). It carries out the reaction cytidine + H2O + H(+) = uridine + NH4(+). Its function is as follows. Catalyzes the deamination of cytidine and deoxycytidine into uridine and deoxyuridine, respectively. May play an important role in testicular development and spermatogenesis. This is Cytidine and dCMP deaminase domain-containing protein 1 (CDADC1) from Homo sapiens (Human).